The sequence spans 524 residues: Coronin-2A (524 aa).

5 WD repeats span residues 80 to 120 (GHRG…LTRN), 130 to 170 (GHAR…SVIA), 178 to 217 (CHQDVILSMSFNTNGSLLATTCKDRKIRIVDPRLGIVLQE), 220 to 263 (YKGH…VPLT), and 269 to 308 (GSSGVLFPFFDSDTSMLYIVGKGDGNIRYYEVSMEKPHLT). The interval 403–436 (LLDSQTLPPERPLSNSMVQVSPQPLEPMKQPAED) is disordered. Residues 404-424 (LDSQTLPPERPLSNSMVQVSP) are compositionally biased toward polar residues. Residues 484-523 (QMFYRQQEEIRRLRELLIQREVQTKQLELEIKNLRMALGQ) adopt a coiled-coil conformation.

The protein belongs to the WD repeat coronin family. As to quaternary structure, binds actin. Component of the N-Cor repressor complex, at least composed of NCOR1, NCOR2, HDAC3, TBL1X, TBL1R, CORO2A and GPS2.

This is Coronin-2A (Coro2a) from Mus musculus (Mouse).